We begin with the raw amino-acid sequence, 551 residues long: MAEPVRLGRKRPLPVCPNPLFVRWLTEWRDEAASRGRHTRFVFQKALRSLQRYPLPLRSGKEAKILQHFGDRLCRMLDEKLKQHLASGGDHAPSSPSGKKGASKGPPEQVQDSSMPVPTQPQAGSTSVGYWPAQNSGAREILLQLYREHLNSDGHSFLTKEELLQKCAQKTPRVVPGSSKPWPALRSLLHRNLILGTHRPARYALTPEGLELAQKLAEAEGLSTRHAGFRPEEHHGEDSAVPEALSEPGTTEGAVQQRPLELRPSEYRVLLCVDIGETRGAGHRPEMLRELQRLRVPHTVRKLHVGDFVWVAQETRPRDPERPGELVLDHIVERKRLDDLCSSIIDGRFREQKFRLKRCGLGHRVYLVEEHGSVHNLSLPESTLLQAVTNTQVIDGFFVKRTMDIKESAGYLALLTKGLERLYQGHTLRSRPWGAPGAAESEAKPSTNPLCSLLTFSDFNAEAVKNKAQSVREVFARQLMQVRGLSGEKAAAVVDRYSTPASLLAAYDACATAKEQEMLLSTIKCGRLQRNLGPALSRTLYQLYCSHSPLS.

Disordered regions lie at residues 84–131 (HLAS…VGYW) and 229–259 (FRPEEHHGEDSAVPEALSEPGTTEGAVQQRP). A compositionally biased stretch (low complexity) spans 92–107 (APSSPSGKKGASKGPP). Residue S95 is modified to Phosphoserine. Residues 110 to 131 (VQDSSMPVPTQPQAGSTSVGYW) are compositionally biased toward polar residues. Residues 124–244 (GSTSVGYWPA…HGEDSAVPEA (121 aa)) are interaction with BLM. Residues 131 to 230 (WPAQNSGARE…GLSTRHAGFR (100 aa)) form a winged helix domain (WHD); critical for endonuclease activity region. Residues 229–238 (FRPEEHHGED) are compositionally biased toward basic and acidic residues. Positions 270–372 (LLCVDIGETR…HRVYLVEEHG (103 aa)) constitute an ERCC4 domain. Residues D274, E277, and D307 contribute to the active site. Positions 274, 277, 307, 333, and 334 each coordinate Mg(2+). Residues 471–545 (VREVFARQLM…LSRTLYQLYC (75 aa)) form a helix-hairpin-helix (2HhH); involved in DNA recognition and bending region.

The protein belongs to the XPF family. In terms of assembly, part of the heterodimeric DNA structure-specific endonuclease complex MUS81-EME1. Part of the heterodimeric DNA structure-specific endonuclease complex MUS81-EME2. Interacts with BLM; may stimulate the endonuclease activity of MUS81. Interacts with SLX4/BTBD12; this interaction is direct and links the MUS81-EME1 complex to SLX4, which may coordinate the action of the structure-specific endonuclease during DNA repair. Interacts with DCLRE1B/Apollo. Interacts with RECQL5; this interaction stimulates mitotic DNA synthesis. Interacts with CHEK2. Mg(2+) serves as cofactor. As to expression, expressed highly in testis. Expressed also in bone marrow, brain, thymus and to a lesser extent in heart and skeletal muscle, colon, kidney and spleen.

Its subcellular location is the nucleus. It is found in the nucleolus. In terms of biological role, catalytic subunit of two functionally distinct, structure-specific, heterodimeric DNA endonucleases MUS81-EME1 and MUS81-EME2 that are involved in the maintenance of genome stability. Both endonucleases have essentially the same substrate specificity though MUS81-EME2 is more active than its MUS81-EME1 counterpart. Both cleave 3'-flaps and nicked Holliday junctions, and exhibit limited endonuclease activity with 5' flaps and nicked double-stranded DNAs. MUS81-EME2 which is active during the replication of DNA is more specifically involved in replication fork processing. Replication forks frequently encounter obstacles to their passage, including DNA base lesions, DNA interstrand cross-links, difficult-to-replicate sequences, transcription bubbles, or tightly bound proteins. One mechanism for the restart of a stalled replication fork involves nucleolytic cleavage mediated by the MUS81-EME2 endonuclease. By acting upon the stalled fork, MUS81-EME2 generates a DNA double-strand break (DSB) that can be repaired by homologous recombination, leading to the restoration of an active fork. MUS81-EME2 could also function in telomere maintenance. MUS81-EME1, on the other hand, is active later in the cell cycle and functions in the resolution of mitotic recombination intermediates including the Holliday junctions, the four-way DNA intermediates that form during homologous recombination. The protein is Structure-specific endonuclease subunit MUS81 of Mus musculus (Mouse).